The following is a 687-amino-acid chain: MNDKRKILITCALPYANGYIHLGHLVEYLQADFWARFQNMRGNECVFICADDTHGTPIMVKARELGITPEALIAQSYKEHTQDFADFQVQFSHFGSTNSEENRLLCEYFYKKMQEGNHTRSQPIQQMYCNHDKMFLPDRFVKGTCPKCGAKEQYGDSCDVCASTYSPSDMKDVHCSLCGTAPVMKDSESIFFKLNDFKQYLEEWIPKHCSPEISKKMLEWFNEDLKDLDISRDEPYFGFAIPGTNNKKFFYVWVDAPMGYMSTTEQWAKSQGKTLKDIWQDPSREIYHFIGKDIARFHTIFWPAFLKAAEFRSPNQVFVHGHLMVNGEKMSKSKGTFIAARTYLNHLNPEYLRYYYSTKLSSSVDDIDLNLEDFTNRVNSELVGKITNLGSRGGQMLKKKMDGKMSVPDAEGKKLIEHAQKTAESIAAHYEARDFAKALGEIRGLADDANKYFDEKAPWKTLEADPEGTKQVITTTLNMFRMLAIYLKPVLPFYSQKVAKLLGEKDYVWSDLNTVLTNREINDYEHLATRIEADKVKAMVEEGRKINEEIQAAKKAASTAKPAAAPAPAAAATAGDRPAEIEFADFDKVDLRIGQVIEAEEIKEADKLLRLKIDIGEGQIRQIISGIKAAYKPEQLVGRKVLVCVNLKPRKMKFGMSEGMVLAAGTGGSDLFVLSADDGAQVGQRVK.

The 'HIGH' region motif lies at 14-24; sequence PYANGYIHLGH. Zn(2+) is bound by residues cysteine 145, cysteine 148, cysteine 158, and cysteine 161. The 'KMSKS' region signature appears at 329–333; it reads KMSKS. Residue lysine 332 coordinates ATP. Positions 585–687 constitute a tRNA-binding domain; it reads DFDKVDLRIG…DGAQVGQRVK (103 aa).

This sequence belongs to the class-I aminoacyl-tRNA synthetase family. MetG type 1 subfamily. Homodimer. Zn(2+) serves as cofactor.

It is found in the cytoplasm. The enzyme catalyses tRNA(Met) + L-methionine + ATP = L-methionyl-tRNA(Met) + AMP + diphosphate. Its function is as follows. Is required not only for elongation of protein synthesis but also for the initiation of all mRNA translation through initiator tRNA(fMet) aminoacylation. The sequence is that of Methionine--tRNA ligase from Bdellovibrio bacteriovorus (strain ATCC 15356 / DSM 50701 / NCIMB 9529 / HD100).